The primary structure comprises 441 residues: Homoserine dehydrogenase (441 aa).

NADP(+)-binding residues include asparagine 17 and valine 18. NAD(+) contacts are provided by valine 18 and glycine 47. NADPH is bound at residue valine 18. NADP(+) is bound by residues arginine 49, arginine 50, and lysine 107. Arginine 49 contacts NADPH. Lysine 107 contacts NADPH. 4 residues coordinate Na(+): glutamate 131, valine 134, glycine 136, and isoleucine 138. Residues glycine 189 and glutamate 192 each contribute to the NADP(+) site. L-homoserine is bound by residues glutamate 192 and aspartate 203. Lysine 207 functions as the Proton donor in the catalytic mechanism. Glycine 309 contacts NADP(+). Glycine 309 contributes to the NAD(+) binding site. Glycine 309 contacts NADPH. One can recognise an ACT domain in the interval 356-435 (YVSMNVADKP…VVQGVTSVLR (80 aa)).

It belongs to the homoserine dehydrogenase family. It depends on a metal cation as a cofactor.

It carries out the reaction L-homoserine + NADP(+) = L-aspartate 4-semialdehyde + NADPH + H(+). The catalysed reaction is L-homoserine + NAD(+) = L-aspartate 4-semialdehyde + NADH + H(+). It functions in the pathway amino-acid biosynthesis; L-methionine biosynthesis via de novo pathway; L-homoserine from L-aspartate: step 3/3. The protein operates within amino-acid biosynthesis; L-threonine biosynthesis; L-threonine from L-aspartate: step 3/5. In terms of biological role, catalyzes the conversion of L-aspartate-beta-semialdehyde (L-Asa) to L-homoserine (L-Hse), the third step in the biosynthesis of threonine and methionine from aspartate. The chain is Homoserine dehydrogenase (hom) from Mycobacterium leprae (strain TN).